A 538-amino-acid polypeptide reads, in one-letter code: MKRPKLKKASKRMTCHKRYKIQKKVREHHRKLRKEAKKRGHKKPKKDPGVPNSAPFKEALLREAELRKQQLEELKQQQKLDRQKEQERKRKLEISPDDEQSNVETQEESDEPKIKKAKSGKQNPKKLHCQELKKVIEASDIVLEVLDARDPLGCRCPQVEEAVIQSGCKKLVLVLNKSDLVPKENLENWLTYLNKELPTVVFKASTNLKNRKKTFKIKKKVVPFQSKLCCGKEALWKLLGGFQQSCGKGVQVGVVGFPNVGKSSIINSLKQERICSVGVSMGLTRSMQIVPLDKQITIIDSPCFIISPCNSPAALALRSPASIEVLRPLEAASAILSQADSQQVVLKYTVPGYKDSLDFFTKLAQRRGLHQKGGSPNVESAAKLLWSEWTGASLGYYCHPPASWNHSPHFNENITAIMKRGFNLEELEKNNAHSIQVLKGPHLTNKILFRSSGLTNGILEEKDIPEESPKQTEDQQDGDDQEHVTGEKNAEISDVTPVEETREMSPGQSTASKPSDRSFILDKMSEEDDAYDFTTDYI.

A compositionally biased stretch (basic residues) spans 1 to 45 (MKRPKLKKASKRMTCHKRYKIQKKVREHHRKLRKEAKKRGHKKPK). Residues 1–125 (MKRPKLKKAS…KAKSGKQNPK (125 aa)) are disordered. A basic region spans residues 2–46 (KRPKLKKASKRMTCHKRYKIQKKVREHHRKLRKEAKKRGHKKPKK). Residues 54–95 (APFKEALLREAELRKQQLEELKQQQKLDRQKEQERKRKLEIS) adopt a coiled-coil conformation. Over residues 59–94 (ALLREAELRKQQLEELKQQQKLDRQKEQERKRKLEI) the composition is skewed to basic and acidic residues. The residue at position 79 (Lys79) is an N6-acetyllysine. Lys91 participates in a covalent cross-link: Glycyl lysine isopeptide (Lys-Gly) (interchain with G-Cter in SUMO2). Residues Ser95 and Ser101 each carry the phosphoserine modification. Residues 95 to 110 (SPDDEQSNVETQEESD) show a composition bias toward acidic residues. A compositionally biased stretch (basic residues) spans 115–125 (KKAKSGKQNPK). One can recognise a CP-type G domain in the interval 129-307 (CQELKKVIEA…IIDSPCFIIS (179 aa)). Position 176 to 179 (176 to 179 (NKSD)) interacts with GTP. Residues Lys177, Lys248, Lys262, and Lys270 each participate in a glycyl lysine isopeptide (Lys-Gly) (interchain with G-Cter in SUMO2) cross-link. 256–263 (GFPNVGKS) lines the GTP pocket. The interval 277–451 (VGVSMGLTRS…HLTNKILFRS (175 aa)) is intermediate. A GTP-binding site is contributed by 300-303 (DSPC). 2 stretches are compositionally biased toward basic and acidic residues: residues 460-473 (EEKD…KQTE) and 481-491 (QEHVTGEKNAE). Positions 460–532 (EEKDIPEESP…KMSEEDDAYD (73 aa)) are acidic. The interval 460-538 (EEKDIPEESP…DAYDFTTDYI (79 aa)) is disordered. Residues Ser493, Ser505, and Ser518 each carry the phosphoserine modification. Residues 514–524 (PSDRSFILDKM) are compositionally biased toward basic and acidic residues.

Belongs to the TRAFAC class YlqF/YawG GTPase family. As to quaternary structure, interacts with MDM2; this interaction stabilizes MDM2. Interaction with MDM2 occurs in the nucleoplasm and is triggered by a nucleolar release mechanism, such as mitosis-induced nucleolar disassembly. May interact with p53/TP53 via its basic domain. This interaction is most probably indirect and mediated by MDM2-binding. As to expression, expressed in testis.

The protein localises to the nucleus. Its subcellular location is the nucleolus. In terms of biological role, may be required to maintain the proliferative capacity of stem cells. Stabilizes MDM2 by preventing its ubiquitination, and hence proteasomal degradation. This is Guanine nucleotide-binding protein-like 3 (Gnl3) from Rattus norvegicus (Rat).